The chain runs to 133 residues: MRYMKLFFLVTDIGFILYWLSAGFSLIPESWAFKHHDHPFMIAWNWSFFPLDILISVTGLYSLYLQRVNRADWKLMALISLVLTCCSGLQALSFWTFSSDFDLVWWLFNGYLLIYPLFFIHLLLKEGRRTKQS.

4 helical membrane passes run 5–27 (KLFFLVTDIGFILYWLSAGFSLI), 42–64 (IAWNWSFFPLDILISVTGLYSLY), 77–99 (ALISLVLTCCSGLQALSFWTFSS), and 103–125 (LVWWLFNGYLLIYPLFFIHLLLK).

It localises to the cell membrane. This is an uncharacterized protein from Bacillus subtilis (strain 168).